We begin with the raw amino-acid sequence, 330 residues long: Fructose-1,6-bisphosphatase class 1 (330 aa).

Mg(2+)-binding residues include Glu-84, Asp-103, Leu-105, and Asp-106. Substrate-binding positions include 106 to 109, Asn-196, and Lys-262; that span reads DGSS. Residue Glu-268 participates in Mg(2+) binding.

Belongs to the FBPase class 1 family. As to quaternary structure, homotetramer. Mg(2+) is required as a cofactor.

The protein resides in the cytoplasm. It carries out the reaction beta-D-fructose 1,6-bisphosphate + H2O = beta-D-fructose 6-phosphate + phosphate. Its pathway is carbohydrate biosynthesis; gluconeogenesis. The polypeptide is Fructose-1,6-bisphosphatase class 1 (Shewanella frigidimarina (strain NCIMB 400)).